Here is a 309-residue protein sequence, read N- to C-terminus: Dihydroorotate dehydrogenase B (NAD(+)), catalytic subunit (309 aa).

Residues S21 and 45–46 contribute to the FMN site; that span reads KA. Residues K45 and 69 to 73 each bind substrate; that span reads NAIGL. FMN is bound by residues N99 and N127. N127 lines the substrate pocket. The active-site Nucleophile is C130. Residues K165 and I191 each coordinate FMN. 192–193 provides a ligand contact to substrate; it reads NT. Residues G217, 243–244, and 265–266 contribute to the FMN site; these read GG and GT.

This sequence belongs to the dihydroorotate dehydrogenase family. Type 1 subfamily. As to quaternary structure, heterotetramer of 2 PyrK and 2 PyrD type B subunits. FMN serves as cofactor.

It is found in the cytoplasm. It catalyses the reaction (S)-dihydroorotate + NAD(+) = orotate + NADH + H(+). Its pathway is pyrimidine metabolism; UMP biosynthesis via de novo pathway; orotate from (S)-dihydroorotate (NAD(+) route): step 1/1. In terms of biological role, catalyzes the conversion of dihydroorotate to orotate with NAD(+) as electron acceptor. This is Dihydroorotate dehydrogenase B (NAD(+)), catalytic subunit (pyrD) from Bacillus cereus (strain B4264).